A 177-amino-acid chain; its full sequence is Superoxide dismutase [Cu-Zn] 1 (177 aa).

The signal sequence occupies residues M1–A20. Residues H69, H71, and H94 each coordinate Cu cation. A disulfide bond links C76 and C172. Positions 94, 103, 112, and 115 each coordinate Zn(2+). Residue H150 participates in Cu cation binding.

This sequence belongs to the Cu-Zn superoxide dismutase family. In terms of assembly, monomer. Cu cation is required as a cofactor. The cofactor is Zn(2+).

The protein resides in the periplasm. It carries out the reaction 2 superoxide + 2 H(+) = H2O2 + O2. Functionally, destroys radicals which are normally produced within the cells and which are toxic to biological systems. The sequence is that of Superoxide dismutase [Cu-Zn] 1 (sodC1) from Salmonella typhimurium (strain 4/74).